We begin with the raw amino-acid sequence, 499 residues long: MAKLSKENLLLLFTVLGVVVGIGLGFSLRDPSKAWSKRHLSYLRFPGDLFVQMLKMLILPMIMSSIITSLASLDSGTAGRLGMVSMIYYTLTTFFAVFLGIVLVSVIKPGKWTTTNIEDLVGHVKTTPCVATAVDTIIDLMKSCFPENLIEATFRSQKICLKFFNGTTEIPPEIAMTMSPEQRAQFTEVPEKIVSDGMNILGLVVFSVALGIVIGVIGEDGKPMKNFFKSLEACSMKLIGWVIIYSPVGITFLIAAQIVGMKDPGQELHRLMGYVITVILGLLIHAFVVIPLLCVVLARRNPIKFVGGMAQALLTALATSSSSATLPLSIKCCEENNKVDPRVTRFVLPLGATINMDGTALYEAVAAIYISQCYGNDLSLGEVVLVSLTATLASIGAAGIPQAGIVTMIMVLIAIGLPTNLFILIFPVDFMLDRLRTTVNVHGDSIATAVIERLCEDQLQKGGHHLDTNDQGYSMLSTNASPDPKRITIGNNCENSHML.

Residues 1–7 (MAKLSKE) are Cytoplasmic-facing. The next 3 membrane-spanning stretches (helical) occupy residues 8 to 28 (NLLLLFTVLGVVVGIGLGFSL), 50 to 70 (FVQMLKMLILPMIMSSIITSL), and 87 to 107 (IYYTLTTFFAVFLGIVLVSVI). Asn165 carries an N-linked (GlcNAc...) asparagine glycan. The next 3 helical transmembrane spans lie at 194 to 217 (VSDGMNILGLVVFSVALGIVIGVI), 227 to 254 (FFKSLEACSMKLIGWVIIYSPVGITFLI), and 276 to 297 (ITVILGLLIHAFVVIPLLCVVL). An intramembrane region (discontinuously helical) is located at residues 303–333 (IKFVGGMAQALLTALATSSSSATLPLSIKCC). 320–322 (SSS) contacts L-aspartate. Residues 343–369 (VTRFVLPLGATINMDGTALYEAVAAIY) form a helical membrane-spanning segment. Residues Gly351, Thr353, and Asn355 each coordinate Na(+). L-aspartate is bound by residues Thr359, 400–404 (IPQAG), Asp433, and Asn440. The segment at residues 383–416 (VVLVSLTATLASIGAAGIPQAGIVTMIMVLIAIG) is an intramembrane region (discontinuously helical). The chain crosses the membrane as a helical span at residues 430-451 (FMLDRLRTTVNVHGDSIATAVI). Residues Asn440 and Asp444 each coordinate Na(+).

The protein belongs to the dicarboxylate/amino acid:cation symporter (DAACS) (TC 2.A.23) family.

The protein resides in the cell membrane. Sodium-dependent, high-affinity amino acid transporter that mediates the uptake of L-glutamate and also L-aspartate and D-aspartate. Functions as a symporter that transports one amino acid molecule together with two or three Na(+) ions and one proton, in parallel with the counter-transport of one K(+) ion. Mediates Cl(-) flux that is not coupled to amino acid transport; this avoids the accumulation of negative charges due to aspartate and Na(+) symport. This is Putative sodium-dependent excitatory amino acid transporter glt-4 (glt-4) from Caenorhabditis elegans.